We begin with the raw amino-acid sequence, 530 residues long: UPF0422 protein lpp3030 (530 aa).

The N-terminal stretch at 1–19 is a signal peptide; that stretch reads MKFKKIILALACLSSPLYA. The stretch at 20–66 forms a coiled coil; that stretch reads DQDQQLKSEIQRLQHQAEDLQAQLNRLQKQLANHKSSQQKHEQQAAA. The disordered stretch occupies residues 50–81; the sequence is LANHKSSQQKHEQQAAAKPAEPKSKPTTKSGA. Over residues 63–79 the composition is skewed to low complexity; it reads QAAAKPAEPKSKPTTKS.

It belongs to the UPF0422 family.

The sequence is that of UPF0422 protein lpp3030 from Legionella pneumophila (strain Paris).